Reading from the N-terminus, the 328-residue chain is Ribose-phosphate pyrophosphokinase (328 aa).

ATP is bound by residues 39–41 (DGE) and 98–99 (RQ). His-132 and Asp-172 together coordinate Mg(2+). The active site involves Lys-195. Residues Arg-197, Asp-221, and 225-229 (DTGGT) each bind D-ribose 5-phosphate.

It belongs to the ribose-phosphate pyrophosphokinase family. Class I subfamily. Homohexamer. It depends on Mg(2+) as a cofactor.

The protein resides in the cytoplasm. It catalyses the reaction D-ribose 5-phosphate + ATP = 5-phospho-alpha-D-ribose 1-diphosphate + AMP + H(+). Its pathway is metabolic intermediate biosynthesis; 5-phospho-alpha-D-ribose 1-diphosphate biosynthesis; 5-phospho-alpha-D-ribose 1-diphosphate from D-ribose 5-phosphate (route I): step 1/1. Functionally, involved in the biosynthesis of the central metabolite phospho-alpha-D-ribosyl-1-pyrophosphate (PRPP) via the transfer of pyrophosphoryl group from ATP to 1-hydroxyl of ribose-5-phosphate (Rib-5-P). The polypeptide is Ribose-phosphate pyrophosphokinase (Mycoplasma pneumoniae (strain ATCC 29342 / M129 / Subtype 1) (Mycoplasmoides pneumoniae)).